Consider the following 995-residue polypeptide: Integrator complex subunit 8 (995 aa).

A Phosphothreonine modification is found at T18. The WFEF motif signature appears at 24–29 (WFEFLL). 4 TPR repeats span residues 250–288 (CQVC…IAEI), 320–356 (SQQL…SLPV), 570–603 (VYIL…VTEF), and 833–866 (HSWL…CSDF).

It belongs to the Integrator subunit 8 family. In terms of assembly, component of the Integrator complex, composed of core subunits INTS1, INTS2, INTS3, INTS4, INTS5, INTS6, INTS7, INTS8, INTS9/RC74, INTS10, INTS11/CPSF3L, INTS12, INTS13, INTS14 and INTS15. The core complex associates with protein phosphatase 2A subunits PPP2CA and PPP2R1A, to form the Integrator-PP2A (INTAC) complex.

It localises to the nucleus. The protein resides in the chromosome. Its function is as follows. Component of the integrator complex, a multiprotein complex that terminates RNA polymerase II (Pol II) transcription in the promoter-proximal region of genes. The integrator complex provides a quality checkpoint during transcription elongation by driving premature transcription termination of transcripts that are unfavorably configured for transcriptional elongation: the complex terminates transcription by (1) catalyzing dephosphorylation of the C-terminal domain (CTD) of Pol II subunit POLR2A/RPB1 and SUPT5H/SPT5, (2) degrading the exiting nascent RNA transcript via endonuclease activity and (3) promoting the release of Pol II from bound DNA. The integrator complex is also involved in terminating the synthesis of non-coding Pol II transcripts, such as enhancer RNAs (eRNAs), small nuclear RNAs (snRNAs), telomerase RNAs and long non-coding RNAs (lncRNAs). Within the integrator complex, INTS8 is required for the recruitment of protein phosphatase 2A (PP2A) to transcription pause-release checkpoint. The chain is Integrator complex subunit 8 from Homo sapiens (Human).